We begin with the raw amino-acid sequence, 96 residues long: Small ribosomal subunit protein uS19 (96 aa).

This sequence belongs to the universal ribosomal protein uS19 family.

Its function is as follows. Protein S19 forms a complex with S13 that binds strongly to the 16S ribosomal RNA. The protein is Small ribosomal subunit protein uS19 of Koribacter versatilis (strain Ellin345).